The chain runs to 98 residues: NADH-ubiquinone oxidoreductase chain 4L (98 aa).

The next 3 membrane-spanning stretches (helical) occupy residues methionine 1–leucine 21, serine 29–leucine 49, and isoleucine 61–valine 81.

It belongs to the complex I subunit 4L family. As to quaternary structure, core subunit of respiratory chain NADH dehydrogenase (Complex I) which is composed of 45 different subunits.

The protein resides in the mitochondrion inner membrane. It catalyses the reaction a ubiquinone + NADH + 5 H(+)(in) = a ubiquinol + NAD(+) + 4 H(+)(out). Core subunit of the mitochondrial membrane respiratory chain NADH dehydrogenase (Complex I) which catalyzes electron transfer from NADH through the respiratory chain, using ubiquinone as an electron acceptor. Part of the enzyme membrane arm which is embedded in the lipid bilayer and involved in proton translocation. The protein is NADH-ubiquinone oxidoreductase chain 4L (MT-ND4L) of Procavia capensis (Rock hyrax).